Consider the following 478-residue polypeptide: Zinc metalloproteinase/disintegrin (478 aa).

The first 20 residues, 1–20, serve as a signal peptide directing secretion; that stretch reads MIEVLLVTICLAVFPYPGSS. Positions 21–190 are excised as a propeptide; that stretch reads IILESGNVDD…KASQLYLTPE (170 aa). Gln191 carries the pyrrolidone carboxylic acid modification. Residues 197–392 form the Peptidase M12B domain; sequence RYIELAIVVD…SKPQCIINAP (196 aa). Positions 200 and 284 each coordinate Ca(2+). 3 cysteine pairs are disulfide-bonded: Cys308/Cys387, Cys349/Cys371, and Cys351/Cys354. His333 provides a ligand contact to Zn(2+). Residue Glu334 is part of the active site. His337 and His343 together coordinate Zn(2+). Residues Cys387 and Asn390 each coordinate Ca(2+). A propeptide spanning residues 393–410 is cleaved from the precursor; the sequence is LRTDTVSTPVSGNEFLEA. Positions 400–478 constitute a Disintegrin domain; the sequence is TPVSGNEFLE…GQSADCPRNS (79 aa). 6 cysteine pairs are disulfide-bonded: Cys414/Cys429, Cys416/Cys424, Cys423/Cys446, Cys437/Cys443, Cys442/Cys467, and Cys455/Cys474. A Cell attachment site motif is present at residues 459 to 461; the sequence is RGD. Residues 459 to 478 form a disordered region; the sequence is RGDNPDDRCTGQSADCPRNS. The span at 468-478 shows a compositional bias: polar residues; sequence TGQSADCPRNS.

It belongs to the venom metalloproteinase (M12B) family. P-II subfamily. P-IIa sub-subfamily. As to quaternary structure, monomer. Zn(2+) serves as cofactor. Post-translationally, not N-glycosylated. In terms of tissue distribution, expressed by the venom gland.

It is found in the secreted. It catalyses the reaction Cleavage of 3-Asn-|-Gln-4, 10-His-|-Leu-11 and 14-Ala-|-Leu-15 in the insulin B chain, and the bond Z-Gly-Pro-|-Leu-Gly-Pro in a small molecule substrate of microbial collagenase.. In terms of biological role, zinc protease that induces hemorrhage. Inhibits platelet aggregation induced by ADP, thrombin, and collagen. Acts by inhibiting fibrinogen interaction with platelet receptors GPIIb/GPIIIa (ITGA2B/ITGB3). This chain is Zinc metalloproteinase/disintegrin, found in Protobothrops flavoviridis (Habu).